A 159-amino-acid polypeptide reads, in one-letter code: Probable acetolactate synthase small subunit (159 aa).

The region spanning 4-78 (TIAVLVENKP…ETIKVSEITE (75 aa)) is the ACT domain.

This sequence belongs to the acetolactate synthase small subunit family. Dimer of large and small chains.

The catalysed reaction is 2 pyruvate + H(+) = (2S)-2-acetolactate + CO2. It participates in amino-acid biosynthesis; L-isoleucine biosynthesis; L-isoleucine from 2-oxobutanoate: step 1/4. It functions in the pathway amino-acid biosynthesis; L-valine biosynthesis; L-valine from pyruvate: step 1/4. This is Probable acetolactate synthase small subunit (ilvH) from Archaeoglobus fulgidus (strain ATCC 49558 / DSM 4304 / JCM 9628 / NBRC 100126 / VC-16).